The chain runs to 1393 residues: DNA-directed RNA polymerase subunit beta' (1393 aa).

Residues cysteine 72, cysteine 74, cysteine 87, and cysteine 90 each contribute to the Zn(2+) site. Mg(2+) contacts are provided by aspartate 463, aspartate 465, and aspartate 467. Zn(2+) is bound by residues cysteine 812, cysteine 887, cysteine 894, and cysteine 897.

This sequence belongs to the RNA polymerase beta' chain family. As to quaternary structure, the RNAP catalytic core consists of 2 alpha, 1 beta, 1 beta' and 1 omega subunit. When a sigma factor is associated with the core the holoenzyme is formed, which can initiate transcription. Mg(2+) is required as a cofactor. The cofactor is Zn(2+).

The catalysed reaction is RNA(n) + a ribonucleoside 5'-triphosphate = RNA(n+1) + diphosphate. Functionally, DNA-dependent RNA polymerase catalyzes the transcription of DNA into RNA using the four ribonucleoside triphosphates as substrates. This is DNA-directed RNA polymerase subunit beta' from Chlamydia abortus (strain DSM 27085 / S26/3) (Chlamydophila abortus).